The primary structure comprises 463 residues: ATP synthase subunit beta (463 aa).

Residue 152–159 coordinates ATP; it reads GGAGVGKT.

Belongs to the ATPase alpha/beta chains family. In terms of assembly, F-type ATPases have 2 components, CF(1) - the catalytic core - and CF(0) - the membrane proton channel. CF(1) has five subunits: alpha(3), beta(3), gamma(1), delta(1), epsilon(1). CF(0) has three main subunits: a(1), b(2) and c(9-12). The alpha and beta chains form an alternating ring which encloses part of the gamma chain. CF(1) is attached to CF(0) by a central stalk formed by the gamma and epsilon chains, while a peripheral stalk is formed by the delta and b chains.

The protein resides in the cell inner membrane. The enzyme catalyses ATP + H2O + 4 H(+)(in) = ADP + phosphate + 5 H(+)(out). Its function is as follows. Produces ATP from ADP in the presence of a proton gradient across the membrane. The catalytic sites are hosted primarily by the beta subunits. The polypeptide is ATP synthase subunit beta (Shewanella denitrificans (strain OS217 / ATCC BAA-1090 / DSM 15013)).